Here is a 94-residue protein sequence, read N- to C-terminus: Large ribosomal subunit protein uL23 (94 aa).

The protein belongs to the universal ribosomal protein uL23 family. Part of the 50S ribosomal subunit. Contacts protein L29, and trigger factor when it is bound to the ribosome.

Its function is as follows. One of the early assembly proteins it binds 23S rRNA. One of the proteins that surrounds the polypeptide exit tunnel on the outside of the ribosome. Forms the main docking site for trigger factor binding to the ribosome. This Lysinibacillus sphaericus (strain C3-41) protein is Large ribosomal subunit protein uL23.